A 104-amino-acid polypeptide reads, in one-letter code: Large ribosomal subunit protein uL23 (104 aa).

It belongs to the universal ribosomal protein uL23 family. As to quaternary structure, part of the 50S ribosomal subunit. Contacts protein L29, and trigger factor when it is bound to the ribosome.

Its function is as follows. One of the early assembly proteins it binds 23S rRNA. One of the proteins that surrounds the polypeptide exit tunnel on the outside of the ribosome. Forms the main docking site for trigger factor binding to the ribosome. The chain is Large ribosomal subunit protein uL23 from Nostoc sp. (strain PCC 7120 / SAG 25.82 / UTEX 2576).